The following is a 219-amino-acid chain: tRNA (guanine-N(7)-)-methyltransferase (219 aa).

Residues glutamate 44, aspartate 69, glutamate 102, and asparagine 125 each coordinate S-adenosyl-L-methionine. Residues lysine 129 and aspartate 161 each coordinate substrate.

This sequence belongs to the class I-like SAM-binding methyltransferase superfamily. TrmB family.

The enzyme catalyses guanosine(46) in tRNA + S-adenosyl-L-methionine = N(7)-methylguanosine(46) in tRNA + S-adenosyl-L-homocysteine. Its pathway is tRNA modification; N(7)-methylguanine-tRNA biosynthesis. Its function is as follows. Catalyzes the formation of N(7)-methylguanine at position 46 (m7G46) in tRNA. This Clostridium perfringens (strain SM101 / Type A) protein is tRNA (guanine-N(7)-)-methyltransferase.